Consider the following 388-residue polypeptide: tRNA-specific 2-thiouridylase MnmA (388 aa).

ATP is bound by residues 26-33 (GLSGGVDS) and leucine 52. Residue cysteine 113 is the Nucleophile of the active site. Cysteine 113 and cysteine 223 are joined by a disulfide. Residue glycine 138 participates in ATP binding. The interaction with tRNA stretch occupies residues 173 to 175 (KDQ). Cysteine 223 serves as the catalytic Cysteine persulfide intermediate. An interaction with tRNA region spans residues 328–329 (RY).

The protein belongs to the MnmA/TRMU family.

Its subcellular location is the cytoplasm. It carries out the reaction S-sulfanyl-L-cysteinyl-[protein] + uridine(34) in tRNA + AH2 + ATP = 2-thiouridine(34) in tRNA + L-cysteinyl-[protein] + A + AMP + diphosphate + H(+). Functionally, catalyzes the 2-thiolation of uridine at the wobble position (U34) of tRNA, leading to the formation of s(2)U34. This Prochlorococcus marinus (strain NATL2A) protein is tRNA-specific 2-thiouridylase MnmA.